The following is a 576-amino-acid chain: Minor capsid protein P2 (576 aa).

Positions 13–35 (LFLYTNSIEMELLAVASIIGYGL) are hydrophobic. Residues 322-348 (TRGRPRTGDGDTEPIINPNGERDGTGS) are disordered.

In terms of assembly, interacts with the major capsid protein.

The protein resides in the virion. Its function is as follows. One of the minor capsid proteins that constitute a network internal to the major capsid proteins and outside the lipid membrane. The minor capsid proteins glue and stabilize the capsomers. Also acts as a molecular tape measure protein that determines the size of the viral capsid. In Chlorella (PBCV-1), this protein is Minor capsid protein P2.